The primary structure comprises 1058 residues: SMC5-SMC6 complex localization factor protein 1 (1058 aa).

BRCT domains are found at residues 12-77 (MTGF…IHSA) and 119-196 (GAPG…GDFL). An NSE5-like domain; mediates interaction with SLF2 region spans residues 410 to 1058 (PRGVLNLIES…MMCRSVMEFS (649 aa)). 3 ANK repeats span residues 806-836 (KGET…DINV), 840-869 (AGWT…EVDL), and 874-903 (DGVT…PVLL). A Glycyl lysine isopeptide (Lys-Gly) (interchain with G-Cter in SUMO2) cross-link involves residue Lys931.

As to quaternary structure, interacts (via N-terminus) with SLF2; this interaction links RAD18 to the SMC5-SMC6 complex. Interacts (via BRCT domains) with RAD18; this interaction occurs in a SLF2-independent manner. Interacts with SMC6. Interacts (via BRCT domains) with RAD18 (via C-terminus and phosphorylated form); this interaction is required for efficient repair of UV-induced DNA damage.

It is found in the nucleus. Its subcellular location is the cytoplasm. The protein resides in the cytoskeleton. The protein localises to the microtubule organizing center. It localises to the centrosome. Its function is as follows. Plays a role in the DNA damage response (DDR) pathway by regulating postreplication repair of UV-damaged DNA and genomic stability maintenance. The SLF1-SLF2 complex acts to link RAD18 with the SMC5-SMC6 complex at replication-coupled interstrand cross-links (ICL) and DNA double-strand breaks (DSBs) sites on chromatin during DNA repair in response to stalled replication forks. Promotes the recruitment of SLF2 and the SMC5-SMC6 complex to DNA lesions. This chain is SMC5-SMC6 complex localization factor protein 1, found in Homo sapiens (Human).